A 133-amino-acid polypeptide reads, in one-letter code: Small ribosomal subunit protein uS8 (133 aa).

This sequence belongs to the universal ribosomal protein uS8 family. In terms of assembly, part of the 30S ribosomal subunit.

Its function is as follows. One of the primary rRNA binding proteins, it binds directly to 16S rRNA central domain where it helps coordinate assembly of the platform of the 30S subunit. The sequence is that of Small ribosomal subunit protein uS8 from Staphylothermus marinus (strain ATCC 43588 / DSM 3639 / JCM 9404 / F1).